Consider the following 336-residue polypeptide: Ketol-acid reductoisomerase (NADP(+)) 1 (336 aa).

In terms of domain architecture, KARI N-terminal Rossmann spans A2–T181. Residues Y25 to Q28, R48, S52, and D82 to Q85 each bind NADP(+). The active site involves H107. An NADP(+)-binding site is contributed by G133. The region spanning T182–V327 is the KARI C-terminal knotted domain. Positions 190, 194, 226, and 230 each coordinate Mg(2+). S251 serves as a coordination point for substrate.

The protein belongs to the ketol-acid reductoisomerase family. Requires Mg(2+) as cofactor.

It catalyses the reaction (2R)-2,3-dihydroxy-3-methylbutanoate + NADP(+) = (2S)-2-acetolactate + NADPH + H(+). The catalysed reaction is (2R,3R)-2,3-dihydroxy-3-methylpentanoate + NADP(+) = (S)-2-ethyl-2-hydroxy-3-oxobutanoate + NADPH + H(+). It participates in amino-acid biosynthesis; L-isoleucine biosynthesis; L-isoleucine from 2-oxobutanoate: step 2/4. Its pathway is amino-acid biosynthesis; L-valine biosynthesis; L-valine from pyruvate: step 2/4. Its function is as follows. Involved in the biosynthesis of branched-chain amino acids (BCAA). Catalyzes an alkyl-migration followed by a ketol-acid reduction of (S)-2-acetolactate (S2AL) to yield (R)-2,3-dihydroxy-isovalerate. In the isomerase reaction, S2AL is rearranged via a Mg-dependent methyl migration to produce 3-hydroxy-3-methyl-2-ketobutyrate (HMKB). In the reductase reaction, this 2-ketoacid undergoes a metal-dependent reduction by NADPH to yield (R)-2,3-dihydroxy-isovalerate. This chain is Ketol-acid reductoisomerase (NADP(+)) 1, found in Bacillus cereus (strain ZK / E33L).